The following is a 457-amino-acid chain: Phosphomethylpyrimidine synthase (457 aa).

Residues Asn80, Met109, Tyr139, His175, 195–197 (SRG), 236–239 (DSLR), and Glu275 each bind substrate. His279 is a Zn(2+) binding site. Substrate is bound at residue Tyr302. His343 serves as a coordination point for Zn(2+). Cys423, Cys426, and Cys431 together coordinate [4Fe-4S] cluster.

The protein belongs to the ThiC family. [4Fe-4S] cluster serves as cofactor.

The enzyme catalyses 5-amino-1-(5-phospho-beta-D-ribosyl)imidazole + S-adenosyl-L-methionine = 4-amino-2-methyl-5-(phosphooxymethyl)pyrimidine + CO + 5'-deoxyadenosine + formate + L-methionine + 3 H(+). It functions in the pathway cofactor biosynthesis; thiamine diphosphate biosynthesis. Catalyzes the synthesis of the hydroxymethylpyrimidine phosphate (HMP-P) moiety of thiamine from aminoimidazole ribotide (AIR) in a radical S-adenosyl-L-methionine (SAM)-dependent reaction. The polypeptide is Phosphomethylpyrimidine synthase (Trichormus variabilis (strain ATCC 29413 / PCC 7937) (Anabaena variabilis)).